We begin with the raw amino-acid sequence, 388 residues long: Cuticle-degrading protease (388 aa).

The first 18 residues, 1–18 (MHLSALLTLLPAVLAAPA), serve as a signal peptide directing secretion. Positions 19–107 (TIGRRAEPAP…IEKDAVMRIS (89 aa)) are excised as a propeptide. One can recognise an Inhibitor I9 domain in the interval 41 to 106 (KYIVKFKDDI…FIEKDAVMRI (66 aa)). One can recognise a Peptidase S8 domain in the interval 116–388 (PWGLGRISHR…TVNYLAYNGA (273 aa)). Cystine bridges form between cysteine 143-cysteine 233 and cysteine 288-cysteine 360. Active-site charge relay system residues include aspartate 148 and histidine 179. N-linked (GlcNAc...) asparagine glycosylation is present at asparagine 296. Catalysis depends on serine 334, which acts as the Charge relay system.

The protein belongs to the peptidase S8 family.

It localises to the secreted. Functionally, capable of breaching the insect cuticle. The protein is Cuticle-degrading protease (PR1) of Metarhizium anisopliae (Entomophthora anisopliae).